A 505-amino-acid chain; its full sequence is Sucrose porin (505 aa).

The first 22 residues, 1 to 22, serve as a signal peptide directing secretion; that stretch reads MYRKSTLAMLIALLTSAASAHA. A disordered region spans residues 44 to 87; sequence ENRAQTAENRAGAAEKKVQQLTAQQQKNQNSTQEVAQRTARLEK. The span at 62-72 shows a compositional bias: low complexity; the sequence is QQLTAQQQKNQ.

The protein belongs to the porin LamB (TC 1.B.3) family. Homotrimer.

It is found in the cell outer membrane. Porin for sucrose uptake. The protein is Sucrose porin (scrY) of Salmonella typhimurium.